The chain runs to 1103 residues: Activity-dependent neuroprotector homeobox protein (1103 aa).

Residues Lys-39 and Lys-72 each participate in a glycyl lysine isopeptide (Lys-Gly) (interchain with G-Cter in SUMO2) cross-link. The segment at 74-97 adopts a C2H2-type 1; degenerate zinc-finger fold; the sequence is FCCSACPFSSKFFSAYKSHFRNVH. Ser-98 carries the post-translational modification Phosphoserine. The C2H2-type 2; degenerate zinc finger occupies 107-129; the sequence is LNCPYCTFNADKKTLETHIKIFH. The disordered stretch occupies residues 133–154; it reads SSAPSSSLSTFKDKNKNDGLKP. Residues 143–154 are compositionally biased toward basic and acidic residues; sequence FKDKNKNDGLKP. Residues Lys-144 and Lys-155 each participate in a glycyl lysine isopeptide (Lys-Gly) (interchain with G-Cter in SUMO2) cross-link. The C2H2-type 3; degenerate zinc-finger motif lies at 165 to 188; that stretch reads YYCKKCTYRDPLYEIVRKHIYREH. Glycyl lysine isopeptide (Lys-Gly) (interchain with G-Cter in SUMO2) cross-links involve residues Lys-203, Lys-231, Lys-266, Lys-274, Lys-278, Lys-279, Lys-311, and Lys-335. A C2H2-type 4; degenerate zinc finger spans residues 221–244; it reads IHCKRCLFMPKSYEALVQHVIEDH. Arg-348 bears the Asymmetric dimethylarginine mark. The segment at 354 to 361 is neuroprotective peptide (NAP); the sequence is NAPVSIPQ. A disordered region spans residues 360-439; the sequence is PQQSQSVKQL…PAATGPPPSN (80 aa). Residues Lys-367 and Lys-408 each participate in a glycyl lysine isopeptide (Lys-Gly) (interchain with G-Cter in SUMO2) cross-link. The segment covering 393-423 has biased composition (polar residues); sequence SLQTANTSSLPPGQVKSPSVSQSQASRVLGQ. A phosphoserine mark is found at Ser-409 and Ser-413. Lys-427 is covalently cross-linked (Glycyl lysine isopeptide (Lys-Gly) (interchain with G-Cter in SUMO2)). Positions 427 to 438 are enriched in pro residues; the sequence is KPPPAATGPPPS. The segment at 447–469 adopts a C2H2-type 5; atypical zinc-finger fold; that stretch reads KICTICNELFPENVYSVHFEKEH. C2H2-type zinc fingers lie at residues 489–510 and 512–535; these read SKCL…MLIH and LSCP…RMVH. Residues Lys-600 and Lys-606 each participate in a glycyl lysine isopeptide (Lys-Gly) (interchain with G-Cter in SUMO2) cross-link. Ser-608 bears the Phosphoserine mark. Residues Lys-616, Lys-621, Lys-632, and Lys-658 each participate in a glycyl lysine isopeptide (Lys-Gly) (interchain with G-Cter in SUMO2) cross-link. The segment at 622–647 adopts a C2H2-type 8; atypical zinc-finger fold; the sequence is TLCPLCFSILKGPISDALAHHLRERH. The C2H2-type 9; atypical zinc finger occupies 662-686; the sequence is YKCIHCLGVYTSNMTASTITLHLVH. The interval 691-712 is disordered; sequence GKTQNGQDKTNAPSRLNQSPGL. Residues 692 to 710 show a composition bias toward polar residues; that stretch reads KTQNGQDKTNAPSRLNQSP. Lys-699 participates in a covalent cross-link: Glycyl lysine isopeptide (Lys-Gly) (interchain with G-Cter in SUMO2). Ser-709 carries the phosphoserine modification. Residues Lys-716, Lys-728, and Lys-731 each participate in a glycyl lysine isopeptide (Lys-Gly) (interchain with G-Cter in SUMO2) cross-link. A Phosphoserine modification is found at Ser-738. A Glycyl lysine isopeptide (Lys-Gly) (interchain with G-Cter in SUMO2) cross-link involves residue Lys-745. A DNA-binding region (homeobox) is located at residues 754–814; it reads LDPKGHEDDS…SNKRKKCVRD (61 aa). Phosphoserine is present on Ser-805. Residues Lys-807, Lys-829, and Lys-835 each participate in a glycyl lysine isopeptide (Lys-Gly) (interchain with G-Cter in SUMO2) cross-link. Residues 873 to 1029 form a disordered region; that stretch reads DSFSDSFEHL…VQDDTEQLKW (157 aa). Phosphoserine is present on residues Ser-876, Ser-878, Ser-886, Ser-889, and Ser-905. Residues Lys-914, Lys-929, and Lys-936 each participate in a glycyl lysine isopeptide (Lys-Gly) (interchain with G-Cter in SUMO2) cross-link. A compositionally biased stretch (basic and acidic residues) spans 922 to 954; the sequence is ESEKLDQKEEEDGSKYETIHLTEERAKLMHDAS. Phosphoserine is present on residues Ser-954 and Ser-956. The span at 972-982 shows a compositional bias: polar residues; the sequence is PSESGPGSRQV. Residue Lys-1017 forms a Glycyl lysine isopeptide (Lys-Gly) (interchain with G-Cter in SUMO2) linkage. N6-acetyllysine; alternate is present on residues Lys-1036 and Lys-1043. Residues Lys-1036 and Lys-1043 each participate in a glycyl lysine isopeptide (Lys-Gly) (interchain with G-Cter in SUMO2); alternate cross-link. The tract at residues 1045-1103 is disordered; that stretch reads QSQWENASENAERLPNPQIEWQNSTIDSEDGEQFDSMTDGVADPMHGSLTGVKLSSQQA. Ser-1072 bears the Phosphoserine mark.

As to quaternary structure, interacts (via N-terminal region) with beta-catenin/CTNNB1 (via the central armadillo domains); interaction is direct and stabilizes CTNNB1 by modulating its phosphorylation by glycogen synthase kinase-3 beta GSK3B.

It localises to the nucleus. The protein resides in the chromosome. May be involved in transcriptional regulation. May mediate some of the neuroprotective peptide VIP-associated effects involving normal growth and cancer proliferation. Positively modulates WNT-beta-catenin/CTNN1B signaling, acting by regulating phosphorylation of, and thereby stabilizing, CTNNB1. May be required for neural induction and neuronal differentiation. May be involved in erythroid differentiation. The polypeptide is Activity-dependent neuroprotector homeobox protein (Adnp) (Rattus norvegicus (Rat)).